Consider the following 318-residue polypeptide: uncharacterized protein (318 aa).

Transmembrane regions (helical) follow at residues 112 to 132, 147 to 167, 209 to 229, and 237 to 257; these read VIGV…PVFL, IAIE…FLSM, CGSS…LLVP, and VIDR…VLQL.

The protein localises to the cell membrane. This is an uncharacterized protein from Bacillus subtilis (strain 168).